A 246-amino-acid chain; its full sequence is Protein PHLOEM PROTEIN 2-LIKE A1 (246 aa).

Vascular tissues, specifically in phloem companion cell-sieve element complexes.

In Arabidopsis thaliana (Mouse-ear cress), this protein is Protein PHLOEM PROTEIN 2-LIKE A1 (PP2A1).